Consider the following 244-residue polypeptide: Orotidine 5'-phosphate decarboxylase (244 aa).

Substrate-binding positions include aspartate 20, lysine 42, 70–79 (DLKFFDIPAT), threonine 125, arginine 186, glutamine 195, glycine 215, and arginine 216. Residue lysine 72 is the Proton donor of the active site.

Belongs to the OMP decarboxylase family. Type 1 subfamily. Homodimer.

The catalysed reaction is orotidine 5'-phosphate + H(+) = UMP + CO2. It participates in pyrimidine metabolism; UMP biosynthesis via de novo pathway; UMP from orotate: step 2/2. In terms of biological role, catalyzes the decarboxylation of orotidine 5'-monophosphate (OMP) to uridine 5'-monophosphate (UMP). The chain is Orotidine 5'-phosphate decarboxylase from Xylella fastidiosa (strain M12).